A 196-amino-acid chain; its full sequence is MKMNDSSKLKKLYQIEEKKFAERVRRYEDIGHMMDTHQFYLEDVVLKKEEMLYKYISPSQGIAELSEEDSLGFDYEFIHKSVGNKEWRGGISTGEMIKVRKLPCTNLAHGGERNARTSSRMQKTKGGRVYACEIEGCNKKYTSSFGLKYHMKEGHSEEKMNIFKPYVCPFSGCDKKYKNNNGLKYHIKHYHDGQTA.

C2H2-type zinc fingers lie at residues 130–155 (YACE…KEGH) and 166–191 (YVCP…KHYH).

This chain is Zinc finger C2H2 protein ECU03_0940, found in Encephalitozoon cuniculi (strain GB-M1) (Microsporidian parasite).